The chain runs to 378 residues: Apoptosis-inducing factor 1 (378 aa).

A helical membrane pass occupies residues 7–25; the sequence is NIVVVGAGVFGVSVANHLY. FAD-binding positions include 12 to 16, Arg-51, Lys-56, and Asp-283; that span reads GAGVF.

The protein belongs to the FAD-dependent oxidoreductase family. The cofactor is FAD.

It localises to the mitochondrion outer membrane. Its subcellular location is the nucleus. Putative FAD-dependent oxidoreductase involved in the resistance to cercosporin and other singlet oxygen-generating photosensitizers. Translocates from mitochondria to the nucleus under apoptotic conditions, where it degrades DNA and induces apoptosis. The sequence is that of Apoptosis-inducing factor 1 (AIF1) from Saccharomyces cerevisiae (strain ATCC 204508 / S288c) (Baker's yeast).